The sequence spans 64 residues: Anti-sigma-G factor Gin (64 aa).

Positions 11, 14, 30, and 33 each coordinate Zn(2+).

Probably functions as a homodimer. Interacts with sigma-G factor, recognition occurs via the first 71 residues of sigma-G. Requires Zn(2+) as cofactor.

Functionally, an anti-sigma-G factor, prevents premature activation of sigma-G factor in the forespore; overexpression leads to 1000-fold reduction in spore formation, spore formation stops after engulfment. Overexpression also inhibits sigma-G transcription activation activity. When both Gin and sigma-G are expressed in E.coli Gin inhibits sigma-G, strongly suggesting Gin inhibits by direct physical interaction. This Bacillus subtilis (strain 168) protein is Anti-sigma-G factor Gin.